The sequence spans 448 residues: Multiple inositol polyphosphate phosphatase 1 (448 aa).

A signal peptide spans 1 to 19 (MAPRRAACLLPLLVAVASA). The active site involves His69. Residues Asn203, Asn257, Asn409, and Asn441 are each glycosylated (N-linked (GlcNAc...) asparagine). Positions 445–448 (ADEL) match the Prevents secretion from ER motif.

This sequence belongs to the histidine acid phosphatase family. MINPP1 subfamily. In terms of processing, N-glycosylated. Present in growth plate chondrocytes but not detectable in articular chondrocytes (at protein level). Spatially restricted to chondrocytes in the lower portion of the proliferative zone and the upper portion of the hypertrophic zone in the growth plate of long bones (at protein level). Weakly expressed in kidney, liver, lung, skin and spleen, and not detected in brain, heart and muscle.

It localises to the endoplasmic reticulum lumen. Its subcellular location is the secreted. The protein localises to the cell membrane. The enzyme catalyses 1D-myo-inositol hexakisphosphate + H2O = 1D-myo-inositol 1,2,4,5,6-pentakisphosphate + phosphate. It catalyses the reaction 1D-myo-inositol 1,2,4,5,6-pentakisphosphate + H2O = 1D-myo-inositol 1,2,5,6-tetrakisphosphate + phosphate. The catalysed reaction is 1D-myo-inositol 1,2,5,6-tetrakisphosphate + H2O = 1D-myo-inositol 1,2,6-trisphosphate + phosphate. It carries out the reaction 1D-myo-inositol 1,2,6-trisphosphate + H2O = 1D-myo-inositol 1,2-bisphosphate + phosphate. The enzyme catalyses 1D-myo-inositol 1,2-bisphosphate + H2O = 1D-myo-inositol 2-phosphate + phosphate. It catalyses the reaction 1D-myo-inositol hexakisphosphate + H2O = 1D-myo-inositol 1,2,3,5,6-pentakisphosphate + phosphate. The catalysed reaction is 1D-myo-inositol 1,2,3,5,6-pentakisphosphate + H2O = 1D-myo-inositol 1,2,3,6-tetrakisphosphate + phosphate. It carries out the reaction 1D-myo-inositol 1,2,3,6-tetrakisphosphate + H2O = 1D-myo-inositol 1,2,3-trisphosphate + phosphate. The enzyme catalyses 1D-myo-inositol 1,2,3-trisphosphate + H2O = 1D-myo-inositol 2,3-bisphosphate + phosphate. It catalyses the reaction 1D-myo-inositol 2,3-bisphosphate + H2O = 1D-myo-inositol 2-phosphate + phosphate. The catalysed reaction is 1D-myo-inositol 1,3,4,5,6-pentakisphosphate + H2O = 1D-myo-inositol 1,4,5,6-tetrakisphosphate + phosphate. It carries out the reaction 1D-myo-inositol 1,4,5,6-tetrakisphosphate + H2O = 1D-myo-inositol 1,4,5-trisphosphate + phosphate. The enzyme catalyses (2R)-2,3-bisphosphoglycerate + H2O = (2R)-2-phosphoglycerate + phosphate. Its function is as follows. Multiple inositol polyphosphate phosphatase that hydrolyzes 1D-myo-inositol 1,3,4,5,6-pentakisphosphate (InsP5[2OH]) and 1D-myo-inositol hexakisphosphate (InsP6) to a range of less phosphorylated inositol phosphates. This regulates the availability of these various small molecule second messengers and metal chelators which control many aspects of cell physiology. Has a weak in vitro activity towards 1D-myo-inositol 1,4,5-trisphosphate which is unlikely to be physiologically relevant. By regulating intracellular inositol polyphosphates pools, which act as metal chelators, it may control the availability of intracellular calcium and iron, which are important for proper neuronal development and homeostasis. May have a dual substrate specificity, and function as a 2,3-bisphosphoglycerate 3-phosphatase hydrolyzing 2,3-bisphosphoglycerate to 2-phosphoglycerate. 2,3-bisphosphoglycerate (BPG) is formed as part of the Rapoport-Luebering glycolytic bypass and is a regulator of systemic oxygen homeostasis as the major allosteric effector of hemoglobin. The polypeptide is Multiple inositol polyphosphate phosphatase 1 (MINPP1) (Gallus gallus (Chicken)).